We begin with the raw amino-acid sequence, 254 residues long: Splicing factor tls1 (254 aa).

Basic and acidic residues predominate over residues 69 to 83 (KEKQLNTANEPHEAN). 2 disordered regions span residues 69 to 90 (KEKQ…SAQS) and 195 to 216 (RKRQ…LRTS). Basic residues predominate over residues 195–204 (RKRQKKRARM). The span at 205 to 216 (KEKLDSKALRTS) shows a compositional bias: basic and acidic residues.

Belongs to the TLS1 family. In terms of assembly, component of the spliceosome. Interacts with brr2.

It is found in the cytoplasm. The protein localises to the nucleus. Functionally, plays a role in pre-mRNA splicing by facilitating excision of introns featuring long spacing between the branchpoint and 3'-splice site. Assists the splicing of several components involved in chromatin organization, such as several shelterin complex subunits. The polypeptide is Splicing factor tls1 (Schizosaccharomyces pombe (strain 972 / ATCC 24843) (Fission yeast)).